The sequence spans 355 residues: UDP-N-acetylglucosamine--N-acetylmuramyl-(pentapeptide) pyrophosphoryl-undecaprenol N-acetylglucosamine transferase (355 aa).

UDP-N-acetyl-alpha-D-glucosamine contacts are provided by residues 14–16 (TGG), Asn-126, Arg-162, Ser-190, Ile-243, 262–267 (ALTVSE), and Gln-287.

The protein belongs to the glycosyltransferase 28 family. MurG subfamily.

The protein localises to the cell inner membrane. The catalysed reaction is di-trans,octa-cis-undecaprenyl diphospho-N-acetyl-alpha-D-muramoyl-L-alanyl-D-glutamyl-meso-2,6-diaminopimeloyl-D-alanyl-D-alanine + UDP-N-acetyl-alpha-D-glucosamine = di-trans,octa-cis-undecaprenyl diphospho-[N-acetyl-alpha-D-glucosaminyl-(1-&gt;4)]-N-acetyl-alpha-D-muramoyl-L-alanyl-D-glutamyl-meso-2,6-diaminopimeloyl-D-alanyl-D-alanine + UDP + H(+). It functions in the pathway cell wall biogenesis; peptidoglycan biosynthesis. Its function is as follows. Cell wall formation. Catalyzes the transfer of a GlcNAc subunit on undecaprenyl-pyrophosphoryl-MurNAc-pentapeptide (lipid intermediate I) to form undecaprenyl-pyrophosphoryl-MurNAc-(pentapeptide)GlcNAc (lipid intermediate II). The protein is UDP-N-acetylglucosamine--N-acetylmuramyl-(pentapeptide) pyrophosphoryl-undecaprenol N-acetylglucosamine transferase of Vibrio vulnificus (strain CMCP6).